A 365-amino-acid polypeptide reads, in one-letter code: 3-isopropylmalate dehydrogenase (365 aa).

Residue 80–91 (GPKWGTGAVRPE) coordinates NAD(+). Residues Arg98, Arg108, Arg137, and Asp226 each coordinate substrate. Residues Asp226, Asp251, and Asp255 each contribute to the Mg(2+) site. 290-301 (GSAPDLPKGKVN) contacts NAD(+).

The protein belongs to the isocitrate and isopropylmalate dehydrogenases family. Homodimer. It depends on Mg(2+) as a cofactor. Mn(2+) is required as a cofactor.

The protein localises to the cytoplasm. It catalyses the reaction (2R,3S)-3-isopropylmalate + NAD(+) = 4-methyl-2-oxopentanoate + CO2 + NADH. Its pathway is amino-acid biosynthesis; L-leucine biosynthesis; L-leucine from 3-methyl-2-oxobutanoate: step 3/4. Its function is as follows. Catalyzes the oxidation of 3-carboxy-2-hydroxy-4-methylpentanoate (3-isopropylmalate) to 3-carboxy-4-methyl-2-oxopentanoate. The product decarboxylates to 4-methyl-2 oxopentanoate. This is 3-isopropylmalate dehydrogenase (LEU2) from Candida glabrata (strain ATCC 2001 / BCRC 20586 / JCM 3761 / NBRC 0622 / NRRL Y-65 / CBS 138) (Yeast).